A 325-amino-acid polypeptide reads, in one-letter code: uncharacterized protein (325 aa).

A chloroplast-targeting transit peptide spans 1–69 (MAMMTTTTTT…KNRRVSVTVS (69 aa)). Alanine 70 carries the N-acetylalanine modification.

Belongs to the NAD(P)-dependent epimerase/dehydratase family.

The protein resides in the plastid. The protein localises to the chloroplast. This is an uncharacterized protein from Arabidopsis thaliana (Mouse-ear cress).